We begin with the raw amino-acid sequence, 1662 residues long: MATDGASCEPDLSRAPEDAAGAAAEAAKKEFDVDTLSKSELRMLLSVMEGELEARDLVIEALRARRKEVFIQERYGRFNLNDPFLALQRDYEAGAGDKEKKPVCTNPLSILEAVMAHCKKMQERMSAQLAAAESRQKKLEMEKLQLQALEQEHKKLAARLEEERGKNKQVVLMLVKECKQLSGKVIEEAQKLEDVMAKLEEEKKKTNELEEELSAEKRRSTEMEAQMEKQLSEFDTEREQLRAKLNREEAHTTDLKEEIDKMKKMIEQLKRGSDSKPSLSLPRKTKDRRLVSISVGTEGTVTRSVACQTDLVTESADHVKKLPLTMPVKPSTGSPLVSANAKGSVCTSATMARPGIDRQASHSDLIGSSVPAFPPPSANRIEENGPSTDSTPDPTSSTPPLPSNAAPPTTQTPGIAPQNSQAPPMHSLHSPCANASLHPGLNPRIQAARFRFQGNANDPDQNGNTTQSPPSRDMSPTSRDNLVAKQLARNTVTQALSRFTSPQAGAPSRPGAPPTGDVGTHPPVGRTSLKTHGVARVDRGNPPPIPPKKPGLSQTPSPPHPQLKVIIDSSRASNTGAKVDNKTVASPPSSLPQGNRVTNEDNLPKSSSPQLPPKPSIDLTVAPAGCTVSALATSQVGAWPAATPGLNQPACSDSSLVIPTTIAFCSSINPVSASSCRPGASDSLLVTASGWSPSLTPLLMSGGPAPLAGRPTLLQQAAAQGNVTLLSMLLNEEGLDINYSCEDGHSALYSAAKNGHTDCVRLLLSAEAQINAADKNGFTPLCAAAAQGHFECVELLIAYDANINHAADGGQTPLYLACKNENKECIKLLLEAGTNRSVKTTDGWTPVHAAVDTGNVDSLKLLMYHRIPACGNSFNEEESESGVFDLDGGEESPEGIFKPVVPADLINHANREGWTAAHIAASKGFKNCLEILCRHGGLEPERRDKCNRTVHDVATDDCKHLLENLNALKIPLRISVGEIEPSNCGSDDLECENTICALNIRKQTSWDDFSKAVSQALTNHFQAISSDGWWSLEDVTCNNTTDSNIGLSAASIRSITLGNVPWSVGQSFTQSPWDFMRKNKAEHITVLLSGPQEGCLSSVTYASMIPLQMMQNYLRLVEQYHNVIFHGPEGSLQDYIVHQLALCLKHRQMAAGFSCEIVRAEIDAGFSKEQLLDLFISSACLIPVKQSPSKKKIIIILENLEKSSLSELLRDFLAPLENRSTESPCTFQKGNGMSECYYFHENCFLMGTIAKACLQGSDLLVQQHFRWVQLRWDGEPMQGLLQRFLRRKVVNKFKGQAPSPCDPVCKIVDWALSVWRQLNSCLARLGTPEALLGPKYFLSCPVVPGHAQVTVKWMSKLWNGVIAPRVQEAILSRASVKRQPGFGQTTAKRHPSQGQQAVVKAALSILLNKAVLHGCPLPRAELDQHTADFKGGSFPLSIVSSYNSCNKKKGESGAWRKVNTSPRRKSGRFSLPTWNKPDLSTEGIKNKTISQLNYNRNVSLSKQKSLENDLSLTLNLDQRLSLGSDDEADLVKELQSMCSSKSESDISKIADSRDDLRMFDSSGNNPILSATINNLRMPVSQKEVSPLSSHQTTECSNSKSKTELGVSRVKSFLPVPRSKVTLCSQNTKRSSSSSNTRQIEINNNSKENWNLHKNEHLDKPNK.

Disordered regions lie at residues 1 to 23, 203 to 222, 361 to 440, 454 to 479, and 498 to 618; these read MATDGASCEPDLSRAPEDAAGAA, KKKTNELEEELSAEKRRSTE, SHSD…LHPG, GNANDPDQNGNTTQSPPSRDMSPTSR, and RFTS…PSID. Positions 119 to 276 form a coiled coil; that stretch reads KKMQERMSAQ…EQLKRGSDSK (158 aa). A compositionally biased stretch (low complexity) spans 386 to 396; the sequence is PSTDSTPDPTS. Residues 411-422 are compositionally biased toward polar residues; sequence QTPGIAPQNSQA. R498 bears the Asymmetric dimethylarginine mark. The segment covering 583–597 has biased composition (polar residues); the sequence is TVASPPSSLPQGNRV. 6 ANK repeats span residues 709–739, 743–772, 776–805, 809–838, 842–871, and 912–942; these read GRPTLLQQAAAQGNVTLLSMLLNEEGLDINY, DGHSALYSAAKNGHTDCVRLLLSAEAQINA, NGFTPLCAAAAQGHFECVELLIAYDANINH, GGQTPLYLACKNENKECIKLLLEAGTNRSV, DGWTPVHAAVDTGNVDSLKLLMYHRIPACG, and EGWTAAHIAASKGFKNCLEILCRHGGLEPER. The disordered stretch occupies residues 1450 to 1474; sequence GESGAWRKVNTSPRRKSGRFSLPTW. S1524 carries the post-translational modification Phosphoserine. 2 disordered regions span residues 1580–1602 and 1618–1662; these read SQKEVSPLSSHQTTECSNSKSKT and SKVT…KPNK. The segment covering 1582-1599 has biased composition (polar residues); sequence KEVSPLSSHQTTECSNSK. Residues 1624 to 1638 are compositionally biased toward low complexity; it reads SQNTKRSSSSSNTRQ. Residues 1639 to 1648 are compositionally biased toward polar residues; it reads IEINNNSKEN. Over residues 1649–1662 the composition is skewed to basic and acidic residues; that stretch reads WNLHKNEHLDKPNK.

In terms of assembly, interacts with CTTN/cortactin SH3 domain. Interacts with STRN, STRN4/zinedin and MOB4/phocein; this interactions mediate the association with the STRIPAK core complex and may regulate dendritic spine distribution of the STRIPAK complex in hippocampal neurons. Activation of glutamate receptors weakens the interaction with STRN and STRN4.

The protein localises to the cytoplasm. Its subcellular location is the cell cortex. It localises to the cell projection. It is found in the dendritic spine. Regulates the dendritic spine distribution of CTTN/cortactin in hippocampal neurons, and thus controls dendritic spinogenesis and dendritic spine maintenance. Associates with the striatin-interacting phosphatase and kinase (STRIPAK) core complex to regulate dendritic spine distribution of the STRIPAK complex in hippocampal neurons. The polypeptide is Cortactin-binding protein 2 (CTTNBP2) (Chlorocebus aethiops (Green monkey)).